We begin with the raw amino-acid sequence, 237 residues long: Glucosamine-6-phosphate deaminase (237 aa).

Aspartate 67 (proton acceptor; for enolization step) is an active-site residue. The active-site For ring-opening step is asparagine 136. Histidine 138 acts as the Proton acceptor; for ring-opening step in catalysis. The active-site For ring-opening step is the glutamate 143.

It belongs to the glucosamine/galactosamine-6-phosphate isomerase family. NagB subfamily.

It carries out the reaction alpha-D-glucosamine 6-phosphate + H2O = beta-D-fructose 6-phosphate + NH4(+). It functions in the pathway amino-sugar metabolism; N-acetylneuraminate degradation; D-fructose 6-phosphate from N-acetylneuraminate: step 5/5. Its function is as follows. Catalyzes the reversible isomerization-deamination of glucosamine 6-phosphate (GlcN6P) to form fructose 6-phosphate (Fru6P) and ammonium ion. The protein is Glucosamine-6-phosphate deaminase of Lysinibacillus sphaericus (strain C3-41).